Here is a 437-residue protein sequence, read N- to C-terminus: Transmembrane protein with metallophosphoesterase domain (437 aa).

5 consecutive transmembrane segments (helical) span residues 7-27 (LSAE…MLIS), 41-61 (ALLF…LGSL), 87-107 (IIVL…FFLV), 116-136 (LLSF…FVFG), and 164-184 (VLAL…AAQP). A divalent metal cation contacts are provided by aspartate 211, histidine 213, aspartate 243, asparagine 274, histidine 376, and histidine 378.

Belongs to the metallophosphoesterase superfamily. LOC643853 family. Requires a divalent metal cation as cofactor.

The protein localises to the membrane. This is Transmembrane protein with metallophosphoesterase domain (tmppe) from Danio rerio (Zebrafish).